We begin with the raw amino-acid sequence, 357 residues long: A-type ATP synthase subunit C (357 aa).

It belongs to the V-ATPase V0D/AC39 subunit family. Has multiple subunits with at least A(3), B(3), C, D, E, F, H, I and proteolipid K(x).

The protein resides in the cell membrane. Functionally, component of the A-type ATP synthase that produces ATP from ADP in the presence of a proton gradient across the membrane. The sequence is that of A-type ATP synthase subunit C from Methanococcoides burtonii (strain DSM 6242 / NBRC 107633 / OCM 468 / ACE-M).